We begin with the raw amino-acid sequence, 406 residues long: Solanesyl diphosphate synthase 1, chloroplastic (406 aa).

The transit peptide at 1–71 directs the protein to the chloroplast; that stretch reads MMTSCRNIDL…NGIGQSQTVS (71 aa). Residues lysine 126, arginine 129, and histidine 164 each contribute to the isopentenyl diphosphate site. Mg(2+)-binding residues include aspartate 171 and aspartate 175. Arginine 180 is a binding site for an all-trans-polyprenyl diphosphate. Arginine 181 contacts isopentenyl diphosphate. The an all-trans-polyprenyl diphosphate site is built by lysine 257, threonine 258, glutamine 295, and lysine 312.

This sequence belongs to the FPP/GGPP synthase family. As to quaternary structure, homodimer. Interacts with FBN5. The cofactor is Mg(2+). As to expression, higher expression in leaves than in roots.

Its subcellular location is the plastid. The protein resides in the chloroplast. It catalyses the reaction 5 isopentenyl diphosphate + (2E,6E,10E)-geranylgeranyl diphosphate = all-trans-nonaprenyl diphosphate + 5 diphosphate. The catalysed reaction is isopentenyl diphosphate + (2E,6E)-farnesyl diphosphate = (2E,6E,10E)-geranylgeranyl diphosphate + diphosphate. In terms of biological role, involved in providing solanesyl diphosphate for plastoquinone-9 (PQ-9) formation in plastids. Catalyzes the elongation of the prenyl side chain of PQ-9 in plastids. Contributes to the biosynthesis of plastochromanol-8 (PC-8) in plastids. Does not contribute to the synthesis of tocopherol or ubiquinone. PQ-9 and PC-8 are lipophilic antioxidants that act as protectant against photooxidative stress under high light stress conditions. Prefers geranylgeranyl diphosphate to farnesyl diphosphate as substrate. No activity with geranyl diphosphate or dimethylallyl diphosphate as substrate. The polypeptide is Solanesyl diphosphate synthase 1, chloroplastic (Arabidopsis thaliana (Mouse-ear cress)).